Here is a 370-residue protein sequence, read N- to C-terminus: Ubiquinone biosynthesis O-methyltransferase, mitochondrial (370 aa).

The N-terminal 86 residues, 1–86 (MWRGGRLGSR…TYRTPWKRLY (86 aa)), are a transit peptide targeting the mitochondrion. Residue Arg-125 coordinates S-adenosyl-L-methionine. An N6-acetyllysine mark is found at Lys-144 and Lys-150. S-adenosyl-L-methionine is bound by residues Gly-155 and Asp-176. An N6-acetyllysine modification is found at Lys-197. Ser-223 provides a ligand contact to S-adenosyl-L-methionine. Residues Glu-224, Glu-227, and His-228 each coordinate Mg(2+). A disordered region spans residues 336-370 (AQEHQEPAESALKGETGALHANTSGSPSVREEQRT).

Belongs to the class I-like SAM-binding methyltransferase superfamily. UbiG/COQ3 family. As to quaternary structure, component of a multi-subunit COQ enzyme complex, composed of at least COQ3, COQ4, COQ5, COQ6, COQ7 and COQ9. The cofactor is Mg(2+).

It localises to the mitochondrion inner membrane. The enzyme catalyses 3,4-dihydroxy-5-(all-trans-decaprenyl)benzoate + S-adenosyl-L-methionine = 4-hydroxy-3-methoxy-5-(all-trans-decaprenyl)benzoate + S-adenosyl-L-homocysteine + H(+). It catalyses the reaction a 3-demethylubiquinone + S-adenosyl-L-methionine = a ubiquinone + S-adenosyl-L-homocysteine. The catalysed reaction is 3-demethylubiquinol-10 + S-adenosyl-L-methionine = ubiquinol-10 + S-adenosyl-L-homocysteine + H(+). The protein operates within cofactor biosynthesis; ubiquinone biosynthesis. Its function is as follows. O-methyltransferase required for two non-consecutive steps during ubiquinone biosynthesis. Catalyzes the 2 O-methylation of 3,4-dihydroxy-5-(all-trans-decaprenyl)benzoic acid into 4-hydroxy-3-methoxy-5-(all-trans-decaprenyl)benzoic acid. Also catalyzes the last step of ubiquinone biosynthesis by mediating methylation of 3-demethylubiquinone into ubiquinone. Also able to mediate the methylation of 3-demethylubiquinol-10 into ubiquinol-10. The polypeptide is Ubiquinone biosynthesis O-methyltransferase, mitochondrial (Mus musculus (Mouse)).